The chain runs to 306 residues: Mating type protein SmtA-1 (306 aa).

A DNA-binding region (alpha box) is located at residues 49-104 (APKKKVNGFMGFRSYYSPLFSQFPQKARSPFMTILWQHDPFHNEWDFMCSVYSSIR).

This sequence belongs to the MATALPHA1 family.

It localises to the nucleus. Its function is as follows. Mating type proteins are sequence specific DNA-binding proteins that act as master switches in fungal differentiation by controlling gene expression in a cell type-specific fashion. Transcriptional activator that induces the transcription of alpha-specific genes. This is Mating type protein SmtA-1 (SMTA1) from Sordaria macrospora (strain ATCC MYA-333 / DSM 997 / K(L3346) / K-hell).